Consider the following 115-residue polypeptide: MSNTQSVTAVAKYIRMSPHKIRRVLDQIRGRSYQEALMILEFLPYDAGGPIWQVIHSAAANAKHNSGLDKKKLIIDKVFADEGPKLKRIRPRAQGRAYKILKPTCHITVVMKAID.

The protein belongs to the universal ribosomal protein uL22 family. In terms of assembly, part of the 50S ribosomal subunit.

It is found in the plastid. Its subcellular location is the chloroplast. Its function is as follows. This protein binds specifically to 23S rRNA. Functionally, the globular domain of the protein is located near the polypeptide exit tunnel on the outside of the subunit, while an extended beta-hairpin is found that lines the wall of the exit tunnel in the center of the 70S ribosome. The protein is Large ribosomal subunit protein uL22c (rpl22) of Phaeodactylum tricornutum (strain CCAP 1055/1).